We begin with the raw amino-acid sequence, 69 residues long: MSHDIATEEADDGALDRCVLCDLTGKRVDVKEATCTGRPATTFEQAFAVERDAGFDDFLHGPVGPRSTP.

This is an uncharacterized protein from Mycobacterium bovis (strain ATCC BAA-935 / AF2122/97).